The sequence spans 303 residues: Sulfate adenylyltransferase subunit 2 (303 aa).

The protein belongs to the PAPS reductase family. CysD subfamily. Heterodimer composed of CysD, the smaller subunit, and CysN.

It catalyses the reaction sulfate + ATP + H(+) = adenosine 5'-phosphosulfate + diphosphate. It participates in sulfur metabolism; hydrogen sulfide biosynthesis; sulfite from sulfate: step 1/3. Functionally, with CysN forms the ATP sulfurylase (ATPS) that catalyzes the adenylation of sulfate producing adenosine 5'-phosphosulfate (APS) and diphosphate, the first enzymatic step in sulfur assimilation pathway. APS synthesis involves the formation of a high-energy phosphoric-sulfuric acid anhydride bond driven by GTP hydrolysis by CysN coupled to ATP hydrolysis by CysD. This is Sulfate adenylyltransferase subunit 2 from Aliarcobacter butzleri (strain RM4018) (Arcobacter butzleri).